Reading from the N-terminus, the 169-residue chain is MATSSAVLFLLLAVFAAGASAATFRITNNCGFTVWPAGIPVGGGFQLNSKQSSNINVPAGTSAGRIWGRTGCSFNNGRGSCATGDCAGALSCTLSGQPATLAEYTIGGSQDFYDISVIDGYNLAMDFSCSTGVALKCRDSGCPDAYHHPNDVATHACNGNSNYQITFCP.

The first 21 residues, 1-21 (MATSSAVLFLLLAVFAAGASA), serve as a signal peptide directing secretion.

Belongs to the thaumatin family.

Functionally, associated with resistance against stem rust fungi. In Avena sativa (Oat), this protein is Thaumatin-like pathogenesis-related protein 3 (RASTL-3).